The primary structure comprises 207 residues: Uridine kinase (207 aa).

11 to 18 is an ATP binding site; it reads GGSGSGKT.

It belongs to the uridine kinase family.

The protein resides in the cytoplasm. It carries out the reaction uridine + ATP = UMP + ADP + H(+). The catalysed reaction is cytidine + ATP = CMP + ADP + H(+). Its pathway is pyrimidine metabolism; CTP biosynthesis via salvage pathway; CTP from cytidine: step 1/3. It functions in the pathway pyrimidine metabolism; UMP biosynthesis via salvage pathway; UMP from uridine: step 1/1. This is Uridine kinase from Staphylococcus aureus (strain Mu3 / ATCC 700698).